Consider the following 288-residue polypeptide: Nickel/cobalt efflux system RcnA (288 aa).

At 1–12 the chain is on the periplasmic side; it reads MGEFSTLLQQGN. A helical membrane pass occupies residues 13–33; sequence AWFFIPSAILLGVLHGLEPGH. The Cytoplasmic portion of the chain corresponds to 34–51; sequence SKTMMAAFIIAIKGTIKQ. A helical membrane pass occupies residues 52 to 72; it reads AVMLGLAATLSHTAVVWLIAL. Over 73–85 the chain is Periplasmic; the sequence is GGMYVSRAFTAES. A helical membrane pass occupies residues 86–106; that stretch reads VEPWLQLVSAIIILSTAFWMF. Residues 107 to 188 are Cytoplasmic-facing; it reads WRTWKGERDG…FHDREVTNGQ (82 aa). Over residues 125–137 the composition is skewed to basic residues; sequence THHHHDHEHHHHD. Residues 125–144 form a disordered region; that stretch reads THHHHDHEHHHHDHDHDHHH. Residues 189–209 form a helical membrane-spanning segment; the sequence is ILLFGLTGGLIPCPAAITVLL. The Periplasmic segment spans residues 210–223; that stretch reads ICIQLKAFTLGATM. Residues 224-244 form a helical membrane-spanning segment; that stretch reads VLCFSIGLALTLVAVGVGAAI. At 245–266 the chain is on the cytoplasmic side; that stretch reads SVQQAAKRWSGFNTLARKAPYF. A helical membrane pass occupies residues 267 to 287; that stretch reads SSILIGLVGLYMGMHGYLGII. Arg-288 is a topological domain (periplasmic).

It belongs to the NiCoT transporter (TC 2.A.52) family. RcnA subfamily.

It localises to the cell inner membrane. Efflux system for nickel and cobalt. The protein is Nickel/cobalt efflux system RcnA (rcnA) of Citrobacter koseri (strain ATCC BAA-895 / CDC 4225-83 / SGSC4696).